The sequence spans 922 residues: Isoleucine--tRNA ligase (922 aa).

Residues 57-67 (PYANGDIHLGH) carry the 'HIGH' region motif. Residue Glu-553 participates in L-isoleucyl-5'-AMP binding. The 'KMSKS' region signature appears at 594-598 (KMSKS). Lys-597 contributes to the ATP binding site. Zn(2+)-binding residues include Cys-892, Cys-895, Cys-912, and Cys-915.

Belongs to the class-I aminoacyl-tRNA synthetase family. IleS type 1 subfamily. Monomer. The cofactor is Zn(2+).

It localises to the cytoplasm. It carries out the reaction tRNA(Ile) + L-isoleucine + ATP = L-isoleucyl-tRNA(Ile) + AMP + diphosphate. In terms of biological role, catalyzes the attachment of isoleucine to tRNA(Ile). As IleRS can inadvertently accommodate and process structurally similar amino acids such as valine, to avoid such errors it has two additional distinct tRNA(Ile)-dependent editing activities. One activity is designated as 'pretransfer' editing and involves the hydrolysis of activated Val-AMP. The other activity is designated 'posttransfer' editing and involves deacylation of mischarged Val-tRNA(Ile). The polypeptide is Isoleucine--tRNA ligase (Desulfitobacterium hafniense (strain DSM 10664 / DCB-2)).